Consider the following 231-residue polypeptide: Cytochrome b-c1 complex subunit Rieske, mitochondrial (231 aa).

The N-terminal 24 residues, M1–A24, are a transit peptide targeting the mitochondrion. A propeptide spans L25–Q32 (removed in mature form). At G33–S65 the chain is on the mitochondrial matrix side. The helical transmembrane segment at T66–K95 threads the bilayer. Topologically, residues N96–G231 are mitochondrial intermembrane. The 96-residue stretch at R134 to V229 folds into the Rieske domain. Residues C174, H176, C193, and H196 each coordinate [2Fe-2S] cluster. C179 and C195 form a disulfide bridge.

This sequence belongs to the Rieske iron-sulfur protein family. In terms of assembly, component of the ubiquinol-cytochrome c oxidoreductase (cytochrome b-c1 complex, complex III, CIII), a multisubunit enzyme composed of 10 subunits. The complex is composed of 3 respiratory subunits cytochrome b (cob), cytochrome c1 (cyt-1) and Rieske protein (fes-1), 2 core protein subunits pep and ucr-1, and 5 low-molecular weight protein subunits qcr6, qcr7, qcr8, qcr9 and probably NCU16844/qcr10. The complex exists as an obligatory dimer and forms supercomplexes (SCs) in the inner mitochondrial membrane with NADH-ubiquinone oxidoreductase (complex I, CI) and cytochrome c oxidase (complex IV, CIV), resulting in different assemblies (supercomplexes SCI(1)III(2), SCIII(2)IV(1) and SCIII(2)IV(2) as well as higher order I(x)III(y)IV(z) megacomplexes). [2Fe-2S] cluster is required as a cofactor. Post-translationally, processed by both the mitochondrial processing peptidase (MPP) and the mitochondrial intermediate protease (MIP). Initially, MPP removes 25 amino acids from the newly imported precursor in the mitochondrial matrix. This proteolytic processing is then followed by a second proteolytic cleavage by MIP, which removes an octapeptide to generate mature-sized Rieske protein.

It localises to the mitochondrion inner membrane. It catalyses the reaction a quinol + 2 Fe(III)-[cytochrome c](out) = a quinone + 2 Fe(II)-[cytochrome c](out) + 2 H(+)(out). Its function is as follows. Component of the ubiquinol-cytochrome c oxidoreductase, a multisubunit transmembrane complex that is part of the mitochondrial electron transport chain which drives oxidative phosphorylation. The respiratory chain contains 3 multisubunit complexes succinate dehydrogenase (complex II, CII), ubiquinol-cytochrome c oxidoreductase (cytochrome b-c1 complex, complex III, CIII) and cytochrome c oxidase (complex IV, CIV), that cooperate to transfer electrons derived from NADH and succinate to molecular oxygen, creating an electrochemical gradient over the inner membrane that drives transmembrane transport and the ATP synthase. The cytochrome b-c1 complex catalyzes electron transfer from ubiquinol to cytochrome c, linking this redox reaction to translocation of protons across the mitochondrial inner membrane, with protons being carried across the membrane as hydrogens on the quinol. In the process called Q cycle, 2 protons are consumed from the matrix, 4 protons are released into the intermembrane space and 2 electrons are passed to cytochrome c. The Rieske protein is a catalytic core subunit containing a [2Fe-2S] iron-sulfur cluster. It cycles between 2 conformational states during catalysis to transfer electrons from the quinol bound in the Q(0) site in cytochrome b to cytochrome c1. The polypeptide is Cytochrome b-c1 complex subunit Rieske, mitochondrial (fes-1) (Neurospora crassa (strain ATCC 24698 / 74-OR23-1A / CBS 708.71 / DSM 1257 / FGSC 987)).